A 100-amino-acid polypeptide reads, in one-letter code: Large ribosomal subunit protein eL21 (100 aa).

The segment at M1–R21 is disordered.

Belongs to the eukaryotic ribosomal protein eL21 family.

This Pyrobaculum islandicum (strain DSM 4184 / JCM 9189 / GEO3) protein is Large ribosomal subunit protein eL21.